Reading from the N-terminus, the 462-residue chain is MLKMTEEHDKCVSDQPCSPSGTNSSMSQDESDSDAPSSPTGSDGQGSLLTSLGRKVDSEDDERFPACIRDAVSQVLKGYDWSLVPMPVRGNGSLKNKPHVKRPMNAFMVWAQAARRKLADQYPHLHNAELSKTLGKLWRLLSESEKRPFVDEAERLRIQHKKDHPDYKYQPRRRKNVKPGQSDSDSGAELAHHMYKAEPGMGGMGGITDAHHHAEHAGQPHGPPTPPTTPKTDLHHGAKQDLKHEGRRLIDSSRQNIDFSNVDISELSTDVISNMETFDVHEFDQYLPLNGHTSSSSSLPSDQPPAPVSSYASSYGHAGVNGPAWSRKGAMPSSSPSSGEVGQHRLHIKTEQLSPSHYSEHSHRSPPHSDYGSYSSPACVTSATSAASVPFSGSQCDYSDIQSSNYYNPYSSYSSSLYQYPYFHSSRRPYGSPILNSLSMAPAHSPTGSGWDQPVYTTLSRP.

Basic and acidic residues predominate over residues 1 to 12 (MLKMTEEHDKCV). 3 disordered regions span residues 1–57 (MLKM…RKVD), 155–243 (RLRI…QDLK), and 291–375 (GHTS…GSYS). Over residues 15–50 (QPCSPSGTNSSMSQDESDSDAPSSPTGSDGQGSLLT) the composition is skewed to polar residues. The HMG box DNA-binding region spans 100-168 (VKRPMNAFMV…QHKKDHPDYK (69 aa)). 3 stretches are compositionally biased toward basic and acidic residues: residues 155-169 (RLRI…DYKY), 209-218 (DAHHHAEHAG), and 232-243 (TDLHHGAKQDLK). Positions 415 to 423 (SSLYQYPYF) match the 9aaTAD motif. Positions 442–462 (PAHSPTGSGWDQPVYTTLSRP) are disordered. Residues 446–462 (PTGSGWDQPVYTTLSRP) show a composition bias toward polar residues.

Its subcellular location is the nucleus. In terms of biological role, may play a role in central nervous system, limb and facial development. May be involved in male sex determination. Binds the consensus motif 5'-[AT][AT]CAA[AT]G-3'. In Tetraodon nigroviridis (Spotted green pufferfish), this protein is Transcription factor Sox-8 (sox8).